The sequence spans 1391 residues: DNA-directed RNA polymerase subunit beta'' (1391 aa).

Residues cysteine 220, cysteine 291, cysteine 298, and cysteine 301 each coordinate Zn(2+).

Belongs to the RNA polymerase beta' chain family. RpoC2 subfamily. In terms of assembly, in plastids the minimal PEP RNA polymerase catalytic core is composed of four subunits: alpha, beta, beta', and beta''. When a (nuclear-encoded) sigma factor is associated with the core the holoenzyme is formed, which can initiate transcription. It depends on Zn(2+) as a cofactor.

The protein localises to the plastid. It localises to the chloroplast. The catalysed reaction is RNA(n) + a ribonucleoside 5'-triphosphate = RNA(n+1) + diphosphate. Its function is as follows. DNA-dependent RNA polymerase catalyzes the transcription of DNA into RNA using the four ribonucleoside triphosphates as substrates. The sequence is that of DNA-directed RNA polymerase subunit beta'' from Gossypium barbadense (Sea Island cotton).